Consider the following 130-residue polypeptide: Small ribosomal subunit protein uS8 (130 aa).

This sequence belongs to the universal ribosomal protein uS8 family. As to quaternary structure, part of the 30S ribosomal subunit.

Its function is as follows. One of the primary rRNA binding proteins, it binds directly to 16S rRNA central domain where it helps coordinate assembly of the platform of the 30S subunit. This is Small ribosomal subunit protein uS8 from Methanothermococcus thermolithotrophicus (Methanococcus thermolithotrophicus).